The sequence spans 158 residues: NAD(P)H-quinone oxidoreductase subunit J, chloroplastic (158 aa).

Belongs to the complex I 30 kDa subunit family. NDH is composed of at least 16 different subunits, 5 of which are encoded in the nucleus.

It localises to the plastid. The protein localises to the chloroplast thylakoid membrane. It carries out the reaction a plastoquinone + NADH + (n+1) H(+)(in) = a plastoquinol + NAD(+) + n H(+)(out). It catalyses the reaction a plastoquinone + NADPH + (n+1) H(+)(in) = a plastoquinol + NADP(+) + n H(+)(out). Its function is as follows. NDH shuttles electrons from NAD(P)H:plastoquinone, via FMN and iron-sulfur (Fe-S) centers, to quinones in the photosynthetic chain and possibly in a chloroplast respiratory chain. The immediate electron acceptor for the enzyme in this species is believed to be plastoquinone. Couples the redox reaction to proton translocation, and thus conserves the redox energy in a proton gradient. In Nasturtium officinale (Watercress), this protein is NAD(P)H-quinone oxidoreductase subunit J, chloroplastic.